Here is a 141-residue protein sequence, read N- to C-terminus: Hemoglobin subunit alpha-D (141 aa).

The Globin domain occupies 1–141; the sequence is MLTADDKKLI…VAAVLAEKYR (141 aa). Heme b-binding residues include His-58 and His-87.

Belongs to the globin family. In terms of assembly, heterotetramer of two alpha-D chains and two beta chains. In terms of tissue distribution, red blood cells.

In terms of biological role, involved in oxygen transport from the lung to the various peripheral tissues. This Struthio camelus (Common ostrich) protein is Hemoglobin subunit alpha-D (HBAD).